A 276-amino-acid chain; its full sequence is Ribosomal RNA small subunit methyltransferase J (276 aa).

S-adenosyl-L-methionine-binding positions include 135 to 136 (ER) and aspartate 191.

It belongs to the methyltransferase superfamily. RsmJ family.

It is found in the cytoplasm. The enzyme catalyses guanosine(1516) in 16S rRNA + S-adenosyl-L-methionine = N(2)-methylguanosine(1516) in 16S rRNA + S-adenosyl-L-homocysteine + H(+). Specifically methylates the guanosine in position 1516 of 16S rRNA. The sequence is that of Ribosomal RNA small subunit methyltransferase J from Hydrogenovibrio crunogenus (strain DSM 25203 / XCL-2) (Thiomicrospira crunogena).